Reading from the N-terminus, the 100-residue chain is Large ribosomal subunit protein uL23 (100 aa).

The protein belongs to the universal ribosomal protein uL23 family. In terms of assembly, part of the 50S ribosomal subunit. Contacts protein L29, and trigger factor when it is bound to the ribosome.

Its function is as follows. One of the early assembly proteins it binds 23S rRNA. One of the proteins that surrounds the polypeptide exit tunnel on the outside of the ribosome. Forms the main docking site for trigger factor binding to the ribosome. This chain is Large ribosomal subunit protein uL23, found in Synechococcus elongatus (strain ATCC 33912 / PCC 7942 / FACHB-805) (Anacystis nidulans R2).